We begin with the raw amino-acid sequence, 79 residues long: Sec-independent protein translocase protein TatA (79 aa).

A helical transmembrane segment spans residues 1–21 (MGGFTSIWHWVIVLLVIVLLF). Positions 54–79 (ELKTLDAQATQTKVHETSEIKSKQES) are disordered. Residues 66 to 79 (KVHETSEIKSKQES) show a composition bias toward basic and acidic residues.

It belongs to the TatA/E family. As to quaternary structure, the Tat system comprises two distinct complexes: a TatABC complex, containing multiple copies of TatA, TatB and TatC subunits, and a separate TatA complex, containing only TatA subunits. Substrates initially bind to the TatABC complex, which probably triggers association of the separate TatA complex to form the active translocon.

The protein resides in the cell inner membrane. Part of the twin-arginine translocation (Tat) system that transports large folded proteins containing a characteristic twin-arginine motif in their signal peptide across membranes. TatA could form the protein-conducting channel of the Tat system. The sequence is that of Sec-independent protein translocase protein TatA from Helicobacter pylori (strain J99 / ATCC 700824) (Campylobacter pylori J99).